The chain runs to 317 residues: Dehydrogenase/reductase SDR family member 12 (317 aa).

Residues Ser50 and Ile52 each contribute to the NAD(+) site. A substrate-binding site is contributed by Ser175. NAD(+)-binding residues include Tyr201, Lys205, and Thr234. Tyr201 functions as the Proton acceptor in the catalytic mechanism.

The protein belongs to the short-chain dehydrogenases/reductases (SDR) family.

In terms of biological role, putative oxidoreductase. This chain is Dehydrogenase/reductase SDR family member 12, found in Homo sapiens (Human).